The following is a 298-amino-acid chain: GTPase Era (298 aa).

An Era-type G domain is found at 8-176; the sequence is RCGRIAVIGR…VSDLLALLPE (169 aa). The segment at 16 to 23 is G1; sequence GRPNVGKS. 16-23 provides a ligand contact to GTP; it reads GRPNVGKS. Positions 42–46 are G2; sequence QTTRH. The G3 stretch occupies residues 63–66; it reads DTPG. GTP contacts are provided by residues 63 to 67 and 125 to 128; these read DTPGL and NKID. The segment at 125–128 is G4; it reads NKID. The segment at 155–157 is G5; sequence VSA. The region spanning 199 to 283 is the KH type-2 domain; sequence VREQVMRQLG…FLETWVRVRK (85 aa).

Belongs to the TRAFAC class TrmE-Era-EngA-EngB-Septin-like GTPase superfamily. Era GTPase family. In terms of assembly, monomer.

It localises to the cytoplasm. The protein resides in the cell inner membrane. In terms of biological role, an essential GTPase that binds both GDP and GTP, with rapid nucleotide exchange. Plays a role in 16S rRNA processing and 30S ribosomal subunit biogenesis and possibly also in cell cycle regulation and energy metabolism. This chain is GTPase Era, found in Xylella fastidiosa (strain M12).